The following is a 544-amino-acid chain: Chaperonin GroEL 4 (544 aa).

ATP-binding positions include 30–33 (TLGP), Lys-51, 87–91 (DGTTT), Gly-415, and Asp-496.

It belongs to the chaperonin (HSP60) family. In terms of assembly, forms a cylinder of 14 subunits composed of two heptameric rings stacked back-to-back. Interacts with the co-chaperonin GroES.

It is found in the cytoplasm. It catalyses the reaction ATP + H2O + a folded polypeptide = ADP + phosphate + an unfolded polypeptide.. Its function is as follows. Together with its co-chaperonin GroES, plays an essential role in assisting protein folding. The GroEL-GroES system forms a nano-cage that allows encapsulation of the non-native substrate proteins and provides a physical environment optimized to promote and accelerate protein folding. This Sinorhizobium medicae (strain WSM419) (Ensifer medicae) protein is Chaperonin GroEL 4.